A 358-amino-acid polypeptide reads, in one-letter code: Fructose-bisphosphate aldolase 2, cytoplasmic (358 aa).

A substrate-binding site is contributed by Arg-39. The Proton acceptor role is filled by Glu-183. Residue Lys-225 is the Schiff-base intermediate with dihydroxyacetone-P of the active site. Residues 266–268 (SGG) and Arg-298 contribute to the substrate site.

Belongs to the class I fructose-bisphosphate aldolase family. In terms of assembly, homotetramer.

It localises to the cytoplasm. The protein resides in the cytosol. The catalysed reaction is beta-D-fructose 1,6-bisphosphate = D-glyceraldehyde 3-phosphate + dihydroxyacetone phosphate. It functions in the pathway carbohydrate degradation; glycolysis; D-glyceraldehyde 3-phosphate and glycerone phosphate from D-glucose: step 4/4. Its function is as follows. Fructose-bisphosphate aldolase that plays a key role in glycolysis and gluconeogenesis. The sequence is that of Fructose-bisphosphate aldolase 2, cytoplasmic from Oryza sativa subsp. japonica (Rice).